The sequence spans 627 residues: MEEADRILIHSLRQAGTAVPPEVQTLRAFTTELVVEAVVRCLRVINPDVGSGLSHLLPPAMSARFRLAMSLAQACMDLGYPLELGYQNFLYPSEPDLRDLLLFLAERLPTDASEDADQPAGDSAIFLRAIGSQIRDQLALPWVPPLLRTPKVQRLQGSALQQAFHSSRLVLPELNCRGEPREFQASPLLLPAPSQVPQLLGRAASLLEHHAIQLCQHVNRDCPGDEDRVRWASRLPSQEDPRAPQQRLHKQLIEHLRQSWGPLGAPTQVRDLGEMLQAWGAKAMTGVPKGSRFTHSEKFTFHLEPQVQAAQVADIPAASQRPEQDTRAAQEEELESLREQLASVNHNIEEVEANMKSLGMNLVQVETECRQSELSVAEQEQALRLKSRTVELLPDGAANLTKLQLVVESSAQRLIHLASQWEKHRVPLLAEYRHLRKLQDCRELESSRRLVEIQELHQSVRAAAEEARRKEEVYKQLVSELETLPKDVSRLAYTQRILEIVGNIRKQKEEITKILSDTKELQKEINSLSGKLDRTFAVTDELVFKDAKKDDAVRKAYKYLAALHENCSQLIQTIEDTGTIMREVRDLEEQIETEMGKKTLSNLEKICEDYRALRQENAGLLGRVREV.

The tract at residues 1 to 321 (MEEADRILIH…VADIPAASQR (321 aa)) is sufficient for interaction with COMMD1. The sufficicient and required for interaction with CCDC93 stretch occupies residues 1-447 (MEEADRILIH…LQDCRELESS (447 aa)). The stretch at 321–384 (RPEQDTRAAQ…SVAEQEQALR (64 aa)) forms a coiled coil. At serine 410 the chain carries Phosphoserine. Positions 448 to 535 (RRLVEIQELH…NSLSGKLDRT (88 aa)) form a coiled coil.

This sequence belongs to the CCDC22 family. Component of the commander complex consisting of the CCC subcomplex and the retriever subcomplex. Component of the CCC (COMMD/CCDC22/CCDC93) subcomplex consisting of COMMD1, COMMD2, COMMD3, COMMD4, COMMD5, COMMD6, COMMD7, COMMD8, COMMD9, COMMD10, CCDC22 and CCDC93. Forms a coiled-coil heterodimer with CCDC22; this heterodimer interacts with the guanine nucleotide exchange factor DENND10; the interaction is direct. Interacts with CUL1, CUL2, CUL3, SKP1, BTRC. Interacts with SNX17 and SNX31. Interacts with CPNE1 and CPNE4.

The protein localises to the endosome. The protein resides in the cytoplasm. Its subcellular location is the cytoskeleton. It localises to the microtubule organizing center. It is found in the centrosome. Its function is as follows. Component of the commander complex that is essential for endosomal recycling of transmembrane cargos; the Commander complex is composed of composed of the CCC subcomplex and the retriever subcomplex. Component of the CCC complex, which is involved in the regulation of endosomal recycling of surface proteins, including integrins, signaling receptor and channels. Involved in regulation of NF-kappa-B signaling. Promotes ubiquitination of I-kappa-B-kinase subunit IKBKB and its subsequent proteasomal degradation leading to NF-kappa-B activation; the function may involve association with COMMD8 and a CUL1-dependent E3 ubiquitin ligase complex. May down-regulate NF-kappa-B activity via association with COMMD1 and involving a CUL2-dependent E3 ubiquitin ligase complex. Regulates the cellular localization of COMM domain-containing proteins, such as COMMD1 and COMMD10. Component of the CCC complex, which is involved in the regulation of endosomal recycling of surface proteins, including integrins, signaling receptor and channels. The CCC complex associates with SNX17, retriever and WASH complexes to prevent lysosomal degradation and promote cell surface recycling of numerous cargos such as integrins ITGA5:ITGB1. Plays a role in copper ion homeostasis. Involved in copper-dependent ATP7A trafficking between the trans-Golgi network and vesicles in the cell periphery; the function is proposed to depend on its association within the CCC complex and cooperation with the WASH complex on early endosomes. The polypeptide is Coiled-coil domain-containing protein 22 (Rattus norvegicus (Rat)).